The following is a 491-amino-acid chain: Glucose-6-phosphate 1-dehydrogenase (491 aa).

NADP(+)-binding positions include arginine 50, 92–93 (DV), and lysine 147. Substrate is bound by residues histidine 177, lysine 181, glutamate 215, and aspartate 234. Catalysis depends on histidine 239, which acts as the Proton acceptor. Lysine 339 and lysine 344 together coordinate substrate.

The protein belongs to the glucose-6-phosphate dehydrogenase family.

The enzyme catalyses D-glucose 6-phosphate + NADP(+) = 6-phospho-D-glucono-1,5-lactone + NADPH + H(+). It functions in the pathway carbohydrate degradation; pentose phosphate pathway; D-ribulose 5-phosphate from D-glucose 6-phosphate (oxidative stage): step 1/3. Catalyzes the oxidation of glucose 6-phosphate to 6-phosphogluconolactone. This Dickeya dadantii (strain 3937) (Erwinia chrysanthemi (strain 3937)) protein is Glucose-6-phosphate 1-dehydrogenase.